We begin with the raw amino-acid sequence, 1235 residues long: Serine/threonine-protein kinase TAO2 (1235 aa).

Position 9 is a phosphoserine (serine 9). The Protein kinase domain maps to phenylalanine 28 to valine 281. Residues isoleucine 34–valine 42 and lysine 57 contribute to the ATP site. Catalysis depends on aspartate 151, which acts as the Proton acceptor. Position 181 is a phosphoserine (serine 181). The tract at residues glutamine 318–arginine 457 is disordered. Residues serine 350–alanine 374 are compositionally biased toward low complexity. Over residues serine 375–glycine 393 the composition is skewed to acidic residues. Residues proline 394–valine 409 show a composition bias toward basic and acidic residues. Serine 414 is subject to Phosphoserine. Coiled coils occupy residues serine 486 to glutamine 547 and lysine 574 to asparagine 601. Residue serine 656 is modified to Phosphoserine. The stretch at leucine 681–glutamate 713 forms a coiled coil. 3 disordered regions span residues histidine 732–serine 777, lysine 804–valine 835, and glutamine 891–proline 939. Residues asparagine 766–serine 777 are compositionally biased toward polar residues. 3 positions are modified to phosphoserine: serine 777, serine 825, and serine 827. A compositionally biased stretch (acidic residues) spans proline 899–glycine 908. Positions proline 924 to histidine 934 are enriched in pro residues. 2 helical membrane passes run leucine 965–leucine 985 and alanine 987–cysteine 1007. Residues histidine 1011 and glycine 1031 each carry the phosphoserine modification. The next 3 helical transmembrane spans lie at leucine 1012–leucine 1032, leucine 1043–methionine 1063, and glutamine 1166–leucine 1186. Positions leucine 1198 to arginine 1235 are disordered.

This sequence belongs to the protein kinase superfamily. STE Ser/Thr protein kinase family. STE20 subfamily. Interacts with MAP2K3 and MAP2K6. Self-associates. Interacts with tubulins through the C-terminal domain. Interacts with MAP3K7 and interferes with MAP3K7-binding to CHUK and thus prevents NF-kappa-B activation. Isoform 2 interacts with PCDH8; this complex may also include CDH2. Requires Mg(2+) as cofactor. Isoforms 1 and 2 are autophosphorylated. Post-translationally, C-terminal cleavage of isoform 1 and subsequent nuclear localization requires CASP9 activity. In terms of processing, autophosphorylated. Phosphorylated by ATM. Phosphorylated on Ser-1031 by MAPK14. This phosphorylation is required PCDH8 for endocytosis. As to expression, ubiquitously expressed, with a higher level of expression in testis and brain.

The protein localises to the cytoplasmic vesicle membrane. The protein resides in the cytoplasm. It is found in the cytoskeleton. It localises to the nucleus. Its subcellular location is the cell projection. The protein localises to the dendrite. The catalysed reaction is L-seryl-[protein] + ATP = O-phospho-L-seryl-[protein] + ADP + H(+). It catalyses the reaction L-threonyl-[protein] + ATP = O-phospho-L-threonyl-[protein] + ADP + H(+). With respect to regulation, selectively inhibited by the enantiopure organoruthenium inhibitor 9E1. Activated following arsenic trioxide (As(2)O(3)) treatment. Functionally, serine/threonine-protein kinase involved in different processes such as membrane blebbing and apoptotic bodies formation DNA damage response and MAPK14/p38 MAPK stress-activated MAPK cascade. Phosphorylates itself, MBP, activated MAPK8, MAP2K3, MAP2K6 and tubulins. Activates the MAPK14/p38 MAPK signaling pathway through the specific activation and phosphorylation of the upstream MAP2K3 and MAP2K6 kinases. In response to DNA damage, involved in the G2/M transition DNA damage checkpoint by activating the p38/MAPK14 stress-activated MAPK cascade, probably by mediating phosphorylation of upstream MAP2K3 and MAP2K6 kinases. Isoform 1, but not isoform 2, plays a role in apoptotic morphological changes, including cell contraction, membrane blebbing and apoptotic bodies formation. This function, which requires the activation of MAPK8/JNK and nuclear localization of C-terminally truncated isoform 1, may be linked to the mitochondrial CASP9-associated death pathway. Isoform 1 binds to microtubules and affects their organization and stability independently of its kinase activity. Prevents MAP3K7-mediated activation of CHUK, and thus NF-kappa-B activation, but not that of MAPK8/JNK. May play a role in the osmotic stress-MAPK8 pathway. Isoform 2, but not isoform 1, is required for PCDH8 endocytosis. Following homophilic interactions between PCDH8 extracellular domains, isoform 2 phosphorylates and activates MAPK14/p38 MAPK which in turn phosphorylates isoform 2. This process leads to PCDH8 endocytosis and CDH2 cointernalization. Both isoforms are involved in MAPK14 phosphorylation. The protein is Serine/threonine-protein kinase TAO2 (TAOK2) of Homo sapiens (Human).